A 119-amino-acid chain; its full sequence is Ribonuclease P protein component (119 aa).

The protein belongs to the RnpA family. Consists of a catalytic RNA component (M1 or rnpB) and a protein subunit.

It catalyses the reaction Endonucleolytic cleavage of RNA, removing 5'-extranucleotides from tRNA precursor.. In terms of biological role, RNaseP catalyzes the removal of the 5'-leader sequence from pre-tRNA to produce the mature 5'-terminus. It can also cleave other RNA substrates such as 4.5S RNA. The protein component plays an auxiliary but essential role in vivo by binding to the 5'-leader sequence and broadening the substrate specificity of the ribozyme. The sequence is that of Ribonuclease P protein component from Haemophilus influenzae (strain 86-028NP).